A 118-amino-acid polypeptide reads, in one-letter code: MTRVKRGNVARKRRKKVLKLAKGFRGSHAILFRTAKQQVLKALKYAYIGRKNRKRNYRSLWIVRINAAVRPYGITYNEFIKQLKNSSIALNRKMLSQLAILDHSVFKTILDSCTPGFK.

Belongs to the bacterial ribosomal protein bL20 family.

It localises to the plastid. The protein resides in the chloroplast. Its function is as follows. Binds directly to 23S ribosomal RNA and is necessary for the in vitro assembly process of the 50S ribosomal subunit. It is not involved in the protein synthesizing functions of that subunit. The sequence is that of Large ribosomal subunit protein bL20c from Gracilaria tenuistipitata var. liui (Red alga).